The sequence spans 144 residues: 3-hydroxyacyl-[acyl-carrier-protein] dehydratase FabZ (144 aa).

His-51 is an active-site residue.

This sequence belongs to the thioester dehydratase family. FabZ subfamily.

It localises to the cytoplasm. The catalysed reaction is a (3R)-hydroxyacyl-[ACP] = a (2E)-enoyl-[ACP] + H2O. Its function is as follows. Involved in unsaturated fatty acids biosynthesis. Catalyzes the dehydration of short chain beta-hydroxyacyl-ACPs and long chain saturated and unsaturated beta-hydroxyacyl-ACPs. This chain is 3-hydroxyacyl-[acyl-carrier-protein] dehydratase FabZ, found in Clostridium botulinum (strain ATCC 19397 / Type A).